A 337-amino-acid chain; its full sequence is MAAGTSTLLSLSGPADHMAEGKGAPLRPSVEKRWKLMEPKQTQAGMFKKMSLVDSDTAAGKGSQDEAYTELSLPTAPNKPRLDRPRACKAYTEQRHNTFTELSCLQERPGDIQAQTRKLENPEGQLGPQQLPSSFLRASGDGTVCSAWPGAPRSEQKSAFSKPAKRPAEKPKRSPMLLAGGSAEGSWELSGLITTVDIPYWAHLSTFKFMGDFWKLHTLSQNILLCNAFQGAPTPWLEHTQVQAPTSSAPSSTASRALLPPTLSSLGLSTQNWCAKCNLAFRLTADLVFHMRSHHKREHVGPDPHSKKRREEVLTCPVCHEYFRERHHLSRHMASHS.

The segment covering 1-10 has biased composition (polar residues); it reads MAAGTSTLLS. Disordered stretches follow at residues 1-32, 55-83, and 146-179; these read MAAG…SVEK, SDTA…PRLD, and SAWP…MLLA. An important for transcriptional repression activity region spans residues 69-184; that stretch reads TELSLPTAPN…PMLLAGGSAE (116 aa). 2 C2H2-type zinc fingers span residues 272-299 and 314-336; these read NWCA…KREH and LTCP…MASH. A Nuclear localization signal motif is present at residues 295–302; that stretch reads HKREHVGP.

The protein belongs to the krueppel C2H2-type zinc-finger protein family. In terms of assembly, interacts with OLIG2.

The protein localises to the nucleus. Functionally, transcriptional repressor. Plays a role in oligodendrocyte differentiation, together with OLIG2. Mediates Notch signaling-activated formation of oligodendrocyte precursors. Promotes differentiation of adult neural stem progenitor cells (NSPCs) into mature oligodendrocytes and contributes to remyelination following nerve injury. This chain is Zinc finger protein 488 (Znf488), found in Mus musculus (Mouse).